The sequence spans 104 residues: MRIKNKIKKRIIELIELAYITARKGDLELAREYIKLAEMYSRKGRVKIPLKYKRMFCRKCYTPLITGVTERRRIRSKILIRTCLICNWQRRYVLSRNKGSNKEN.

Residues cysteine 57, cysteine 60, cysteine 83, and cysteine 86 each contribute to the Zn(2+) site.

This sequence belongs to the eukaryotic/archaeal RNase P protein component 4 family. In terms of assembly, consists of a catalytic RNA component and at least 4-5 protein subunits. It depends on Zn(2+) as a cofactor.

It is found in the cytoplasm. The catalysed reaction is Endonucleolytic cleavage of RNA, removing 5'-extranucleotides from tRNA precursor.. In terms of biological role, part of ribonuclease P, a protein complex that generates mature tRNA molecules by cleaving their 5'-ends. The protein is Ribonuclease P protein component 4 of Saccharolobus islandicus (strain M.14.25 / Kamchatka #1) (Sulfolobus islandicus).